The following is a 1226-amino-acid chain: MSLPERPGGSPVYEHRNVYRNSPSRRPRPNDIETGFQSVPRAGHERGKSVSSYAETISNPHANTETLPLSPTHPTASPPPHSPDQPFTRKRSLIRPERNRIDKDHRNYHYHKHAANMETMPSSTGNDPILENVDVSTEPSGGSQTHGSFADSSPPRHHRSRKMSGDDQEKGNTRVKSRPRRSKSGKITKETRHRKSRKNPATAEQIRPPSAWNVYCAIVTFWCPDFMLKCCGKPTKAQRRAWREKMGLISIILVIMAIVGFLTFGFTATVCSAPPERLRVNKVTGGYMIFHGVAYDLSTSHHPPAEGIPLRQDGTGANVLFDLPEKHSGQDGSFLFQNVNGHCKGLINKAPGSDVPTNSDNELAWYFPCTTFNQDGSSRPNFTNPYYLGYACHTSANARNAFYVGLKGAADVYFTWDDIRNSSRNLVVYSGSVLDLNLLNWFNESEISVPDRFKVLRDQDSAVNKAIRGRDVTRMFQSPGDKQVAQCLEEITRVGFVDTETVGCIASKVVLYCALILILSVVGTRFVLALIFQWFISRKYAASKTSQSSDRRKRAKQIEDWSEDIYRAPARLPGDVGSSAMGSSDRTSKRGSSFLPTTSRFSAVYGSDRPTGARRLPTTMSSQGPASALLNPNSIYRQGNDSRASFLRPDPYSSAASPSDGPGPAGFIHDSVVPQPPSDWMPFGFPLAHTMCLVTAYSEGEEGIRTTLDSIAMTDYPNSHKAIVVICDGIIKGKGEAVSTPDVCLGMMKDHATPPDMVESFSYVAVASGSKRHNMAKVYCGFYDYGNKSRIPVEKQQRVPMMLIVKCGTPDEADKAKPGNRGKRDSQIILMSFLQKVMFDERMTELEYEMFNGLWKVTGISPDYYEIVLMVDADTKVFPDSLTHMVSAMVKDPEIMGLCGETKIANKRDSWVTAIQVFEYFISHHLAKSFESVFGGVTCLPGCFCMYRIKAPKGGQNYWVPILANPDVVEHYSENVVETLHEKNLYLLGEDRYLTTLMLRTFPKRKQVFVPQAVCKTTVPDKFMVLLSQRRRWINSTVHNLMELILVRDLCGTFCFSMQFVVFVELVGTLVLPAAIAFTFYVVITSIIHSPPQIIPLVLLALILGLPGLLILVTAHSWSYVVWMLIYLVSLPIWNFVLPTYAFWKFDDFSWGDTRKTAGDKVKKGGIEYQGEFDSSKITMKRWAEFEREKRARSAYFGSRENVVGAPGGWAVPPSHAQTDGYYSDA.

Residues 1–205 (MSLPERPGGS…SRKNPATAEQ (205 aa)) are disordered. Polar residues predominate over residues 49 to 65 (SVSSYAETISNPHANTE). Over residues 66–75 (TLPLSPTHPT) the composition is skewed to low complexity. Residues 94–107 (IRPERNRIDKDHRN) show a composition bias toward basic and acidic residues. Polar residues predominate over residues 134–151 (DVSTEPSGGSQTHGSFAD). The span at 163 to 172 (MSGDDQEKGN) shows a compositional bias: basic and acidic residues. A compositionally biased stretch (basic residues) spans 173–198 (TRVKSRPRRSKSGKITKETRHRKSRK). The chain crosses the membrane as a helical span at residues 246-266 (MGLISIILVIMAIVGFLTFGF). 3 N-linked (GlcNAc...) asparagine glycosylation sites follow: Asn-381, Asn-421, and Asn-443. The chain crosses the membrane as a helical span at residues 516–536 (ILILSVVGTRFVLALIFQWFI). The segment at 572-671 (LPGDVGSSAM…PGPAGFIHDS (100 aa)) is disordered. Polar residues-rich tracts occupy residues 580–601 (AMGS…TSRF) and 618–643 (TTMS…NDSR). Residue Asn-640 is glycosylated (N-linked (GlcNAc...) asparagine). Low complexity predominate over residues 649–666 (PDPYSSAASPSDGPGPAG). 2 N-linked (GlcNAc...) asparagine glycosylation sites follow: Asn-787 and Asn-1035. The next 3 helical transmembrane spans lie at 1060 to 1080 (FVVF…AFTF), 1094 to 1114 (IIPL…ILVT), and 1118 to 1138 (WSYV…NFVL).

Belongs to the chitin synthase family. Class IV subfamily. As to expression, highly expressed in conidia.

Its subcellular location is the cell membrane. It catalyses the reaction [(1-&gt;4)-N-acetyl-beta-D-glucosaminyl](n) + UDP-N-acetyl-alpha-D-glucosamine = [(1-&gt;4)-N-acetyl-beta-D-glucosaminyl](n+1) + UDP + H(+). In terms of biological role, polymerizes chitin, a structural polymer of the cell wall and septum, by transferring the sugar moiety of UDP-GlcNAc to the non-reducing end of the growing chitin polymer. Contributes to the production of conidia and the ability of fungal conidia to germinate. Involved in fungal stress tolerances. In Metarhizium acridum (strain CQMa 102), this protein is Chitin synthase IV.